The following is a 763-amino-acid chain: Xaa-Pro dipeptidyl-peptidase (763 aa).

Residues Ser-349, Asp-469, and His-499 each act as charge relay system in the active site.

It belongs to the peptidase S15 family. Homodimer.

It is found in the cytoplasm. The enzyme catalyses Hydrolyzes Xaa-Pro-|- bonds to release unblocked, N-terminal dipeptides from substrates including Ala-Pro-|-p-nitroanilide and (sequentially) Tyr-Pro-|-Phe-Pro-|-Gly-Pro-|-Ile.. In terms of biological role, removes N-terminal dipeptides sequentially from polypeptides having unsubstituted N-termini provided that the penultimate residue is proline. This is Xaa-Pro dipeptidyl-peptidase from Streptococcus macedonicus (Streptococcus gallolyticus macedonicus).